A 203-amino-acid chain; its full sequence is Proteasome subunit beta 2 (203 aa).

Residues M1–A9 constitute a propeptide, removed in mature form; by autocatalysis. T10 acts as the Nucleophile in catalysis.

The protein belongs to the peptidase T1B family. In terms of assembly, the 20S proteasome core is composed of 14 alpha and 14 beta subunits that assemble into four stacked heptameric rings, resulting in a barrel-shaped structure. The two inner rings, each composed of seven catalytic beta subunits, are sandwiched by two outer rings, each composed of seven alpha subunits. The catalytic chamber with the active sites is on the inside of the barrel. Has a gated structure, the ends of the cylinder being occluded by the N-termini of the alpha-subunits. Is capped at one or both ends by the proteasome regulatory ATPase, PAN.

Its subcellular location is the cytoplasm. The catalysed reaction is Cleavage of peptide bonds with very broad specificity.. Its activity is regulated as follows. The formation of the proteasomal ATPase PAN-20S proteasome complex, via the docking of the C-termini of PAN into the intersubunit pockets in the alpha-rings, triggers opening of the gate for substrate entry. Interconversion between the open-gate and close-gate conformations leads to a dynamic regulation of the 20S proteasome proteolysis activity. Functionally, component of the proteasome core, a large protease complex with broad specificity involved in protein degradation. The protein is Proteasome subunit beta 2 of Pyrobaculum arsenaticum (strain DSM 13514 / JCM 11321 / PZ6).